We begin with the raw amino-acid sequence, 801 residues long: Phosphatidylinositol 4-phosphate 5-kinase 1 (801 aa).

The signal sequence occupies residues 1-21 (MPGLHVVSFLVVLLLQLRSSG). 8 MORN repeats span residues 41–63 (YVGSFDGLVPHGPGKYMWTDGAL), 64–86 (YDGEWDKSKMTGRGLIQWPSGAS), 87–109 (YEGDFRGGFIDGAGTFKGVDGSV), 110–132 (YKGSWRMNKKHGMGTMVYSNSDT), 133–155 (YEGFWNEGLPDEFGKYTWADGNV), 156–178 (YIGRWKSGKMNGSGVMQWINGDT), 182–201 (NWLNGLAHGKGYCKYASGAC), and 202–223 (YIGTWDRGLKDGHGTFYQPGSK). The region spanning 366–797 (GHRSYYLMLN…RFISFLEKVF (432 aa)) is the PIPK domain.

Expressed in young seedlings, shoot and seeds, and at lower level in roots, stem and leaf.

The catalysed reaction is a 1,2-diacyl-sn-glycero-3-phospho-(1D-myo-inositol 4-phosphate) + ATP = a 1,2-diacyl-sn-glycero-3-phospho-(1D-myo-inositol-4,5-bisphosphate) + ADP + H(+). Functionally, involved in flowering. May suppress floral initiation by modifying the expression of genes related to floral induction. The chain is Phosphatidylinositol 4-phosphate 5-kinase 1 (PIPK1) from Oryza sativa subsp. japonica (Rice).